A 406-amino-acid chain; its full sequence is NAD(P)H-quinone oxidoreductase subunit H, organellar chromatophore (406 aa).

The protein belongs to the complex I 49 kDa subunit family. In terms of assembly, NDH is composed of at least 16 different subunits, 5 of which are encoded in the nucleus.

The protein localises to the plastid. It localises to the organellar chromatophore thylakoid membrane. It catalyses the reaction a quinone + NADH + H(+) = a quinol + NAD(+). Its function is as follows. NDH shuttles electrons from NAD(P)H:plastoquinone, via FMN and iron-sulfur (Fe-S) centers, to quinones in the photosynthetic chain and possibly in a chloroplast respiratory chain. The immediate electron acceptor for the enzyme in this species is believed to be plastoquinone. Couples the redox reaction to proton translocation, and thus conserves the redox energy in a proton gradient. The sequence is that of NAD(P)H-quinone oxidoreductase subunit H, organellar chromatophore from Paulinella chromatophora.